Reading from the N-terminus, the 145-residue chain is NADH-ubiquinone oxidoreductase subunit 8 (145 aa).

4Fe-4S ferredoxin-type domains lie at leucine 43–glycine 73 and aspartate 83–phenylalanine 112. [4Fe-4S] cluster contacts are provided by cysteine 53, cysteine 56, cysteine 59, cysteine 63, cysteine 92, cysteine 95, cysteine 98, and cysteine 102.

This sequence belongs to the complex I 23 kDa subunit family. [4Fe-4S] cluster is required as a cofactor.

The protein localises to the mitochondrion. It catalyses the reaction a ubiquinone + NADH + 5 H(+)(in) = a ubiquinol + NAD(+) + 4 H(+)(out). Functionally, core subunit of the mitochondrial membrane respiratory chain NADH dehydrogenase (Complex I) that is believed to belong to the minimal assembly required for catalysis. Complex I functions in the transfer of electrons from NADH to the respiratory chain. The immediate electron acceptor for the enzyme is believed to be ubiquinone. May donate electrons to ubiquinone. This chain is NADH-ubiquinone oxidoreductase subunit 8 (M-ISP1), found in Trypanosoma brucei brucei.